The sequence spans 94 residues: MAHHSLNTFYIWHNNVLHTHLVFFLPHLLNQPFSRGSFLIWLLLCWNSWYHLRTLRRQANQANKLSMMLLRVKQSPGTKLCHGDSELTSGLLAT.

This is an uncharacterized protein from Homo sapiens (Human).